The primary structure comprises 141 residues: Hemoglobin subunit alpha-A (141 aa).

Residues Val-1–Arg-141 form the Globin domain. Position 58 (His-58) interacts with O2. His-87 contacts heme b.

Belongs to the globin family. As to quaternary structure, heterotetramer of two alpha chains and two beta chains. Red blood cells.

Its function is as follows. Involved in oxygen transport from the lung to the various peripheral tissues. The chain is Hemoglobin subunit alpha-A (HBAA) from Branta canadensis (Canada goose).